We begin with the raw amino-acid sequence, 873 residues long: MTAQPPLHHRHHPYTLFGTSCHLSWYGLLEASVPIVQCLFLDLGGGRAEPRLHTFVVRGDRLPPAEVRAVHRASYAALASAVTTDADERRRGLEQRSAVLARVLLEGSALIRVLARTFTPVQIQTDASGVEILEAAPALGVETTALSNALSLFHVAKLVVIGSYPEVHEPRVVTHAAERVSEEYGTHAHKKLRRGYYAYDLAMSFRVGTHKYVLERDDEAVLARLFEVREVCFLRTCLRLVTPVGFVAVAVTDEQCCLLLQSAWTHLYDVLFRGFAGQPPLRDYLGPDLFETGAARSFFFPGFPPVPVYAVHGLHTLMRETALDAAAEVLSWCGLPDIVGSAGKLEVEPCALSLGVPEDEWQVFGTEAGGGAVRLNATAFRERPAGGDRRWLLPPLPRDDGDGENNVVEVSSSTGGAHPPSDDATFTVHVRDATLHRVLIVDLVERVLAKCVRARDFNPYVRYSHRLHTYAVCEKFIENLRFRSRRAFWQIQSLLGYISEHVTSACASAGLLWVLSRGHREFYVYDGYSGHGPVSAEVCVRTVVDCYWRKLFGGDDPGPTCRVQESAPGVLLVWGDERLVGPFNFFYGNGGAGGSPLHGVVGGFAAGHCGGACCAGCVVTHRHSSGGGGSGVGDADHASGGGLDAAAGSGHNGGSDRVSPSTPPAALGGCCCAAGGDWLSAVGHVLGRLPALLRERVSVSELEAVYREILFRFVARRNDVDFWLLRFQPGENEVRPHAGVIDCAPFHGVWAEQGQIIVQSRDTALAADIGYGVYVDKAFAMLTACVEVWARELLSSSTASTTTCSSSSVLSSALPSVTSSSSGTATVSPPSCSSSSATWLEERDEWVRSLAVDAQHAAKRVASEGLRFFRLNA.

Residues 394 to 422 (PPLPRDDGDGENNVVEVSSSTGGAHPPSD) are disordered.

This sequence belongs to the herpesviridae HEPA family. Associates with the primase and the helicase to form the helicase-primase complex. Interacts with the origin-binding protein. Interacts with the polymerase catalytic subunit.

It localises to the host nucleus. Functionally, component of the helicase/primase complex. Unwinds the DNA at the replication forks and generates single-stranded DNA for both leading and lagging strand synthesis. The primase synthesizes short RNA primers on the lagging strand that the polymerase presumably elongates using dNTPs. The primase-associated factor has no known catalytic activity in the complex and may serve to facilitate the formation of the replisome by directly interacting with the origin-binding protein and the polymerase. The sequence is that of DNA helicase/primase complex-associated protein (UL102) from Human cytomegalovirus (strain Merlin) (HHV-5).